The following is a 189-amino-acid chain: Crossover junction endodeoxyribonuclease RuvC (189 aa).

Residues D11, E71, and D143 contribute to the active site. 3 residues coordinate Mg(2+): D11, E71, and D143.

Belongs to the RuvC family. As to quaternary structure, homodimer which binds Holliday junction (HJ) DNA. The HJ becomes 2-fold symmetrical on binding to RuvC with unstacked arms; it has a different conformation from HJ DNA in complex with RuvA. In the full resolvosome a probable DNA-RuvA(4)-RuvB(12)-RuvC(2) complex forms which resolves the HJ. It depends on Mg(2+) as a cofactor.

It localises to the cytoplasm. The enzyme catalyses Endonucleolytic cleavage at a junction such as a reciprocal single-stranded crossover between two homologous DNA duplexes (Holliday junction).. Its function is as follows. The RuvA-RuvB-RuvC complex processes Holliday junction (HJ) DNA during genetic recombination and DNA repair. Endonuclease that resolves HJ intermediates. Cleaves cruciform DNA by making single-stranded nicks across the HJ at symmetrical positions within the homologous arms, yielding a 5'-phosphate and a 3'-hydroxyl group; requires a central core of homology in the junction. The consensus cleavage sequence is 5'-(A/T)TT(C/G)-3'. Cleavage occurs on the 3'-side of the TT dinucleotide at the point of strand exchange. HJ branch migration catalyzed by RuvA-RuvB allows RuvC to scan DNA until it finds its consensus sequence, where it cleaves and resolves the cruciform DNA. The polypeptide is Crossover junction endodeoxyribonuclease RuvC (Methylorubrum extorquens (strain CM4 / NCIMB 13688) (Methylobacterium extorquens)).